The primary structure comprises 200 residues: 2-phospho-L-lactate guanylyltransferase (200 aa).

The protein belongs to the CofC family. In terms of assembly, homodimer.

The catalysed reaction is (2S)-2-phospholactate + GTP + H(+) = (2S)-lactyl-2-diphospho-5'-guanosine + diphosphate. Its pathway is cofactor biosynthesis; coenzyme F420 biosynthesis. Its function is as follows. Guanylyltransferase that catalyzes the activation of (2S)-2-phospholactate (2-PL) as (2S)-lactyl-2-diphospho-5'-guanosine, via the condensation of 2-PL with GTP. It is involved in the biosynthesis of coenzyme F420, a hydride carrier cofactor. This is 2-phospho-L-lactate guanylyltransferase from Ferroglobus placidus (strain DSM 10642 / AEDII12DO).